A 323-amino-acid polypeptide reads, in one-letter code: D-alanine--D-alanine ligase (323 aa).

Residues lysine 102 to glutamine 300 form the ATP-grasp domain. Valine 130–threonine 185 lines the ATP pocket. 3 residues coordinate Mg(2+): aspartate 254, glutamate 267, and asparagine 269.

It belongs to the D-alanine--D-alanine ligase family. The cofactor is Mg(2+). Requires Mn(2+) as cofactor.

Its subcellular location is the cytoplasm. The enzyme catalyses 2 D-alanine + ATP = D-alanyl-D-alanine + ADP + phosphate + H(+). Its pathway is cell wall biogenesis; peptidoglycan biosynthesis. Cell wall formation. The polypeptide is D-alanine--D-alanine ligase (Synechococcus sp. (strain JA-3-3Ab) (Cyanobacteria bacterium Yellowstone A-Prime)).